The following is a 176-amino-acid chain: MDLKNLTQEERSELSLIDVAHFILEQRKETILFPELVKEIQAFLGLKDAEIRERLVQFYTDMNIDGNFISLGNNMWGLRAWYPMDAIDEEVQTQTTPKKKRKSDDDDDEEILDDDVDYDDEEIVEELGEEEITLADVLLDEDEDEDDHLPDGIEGDLATVEDDYTDGDYTEDPEDK.

Positions 14–81 (LSLIDVAHFI…GNNMWGLRAW (68 aa)) constitute an HTH HARE-type domain. 2 disordered regions span residues 91 to 119 (VQTQ…VDYD) and 140 to 176 (DEDE…PEDK). Acidic residues-rich tracts occupy residues 105–119 (DDDD…VDYD) and 159–176 (TVED…PEDK).

This sequence belongs to the RpoE family. As to quaternary structure, RNAP is composed of a core of 2 alpha, a beta and a beta' subunits. The core is associated with a delta subunit and one of several sigma factors.

Its function is as follows. Participates in both the initiation and recycling phases of transcription. In the presence of the delta subunit, RNAP displays an increased specificity of transcription, a decreased affinity for nucleic acids, and an increased efficiency of RNA synthesis because of enhanced recycling. This Listeria welshimeri serovar 6b (strain ATCC 35897 / DSM 20650 / CCUG 15529 / CIP 8149 / NCTC 11857 / SLCC 5334 / V8) protein is Probable DNA-directed RNA polymerase subunit delta.